The following is a 193-amino-acid chain: MGAAGDAAIGRESRELMSAADVGRTISRIAHQIIEKTALDDPVGPDAPRVVLLGIPTRGVTLANRLAGNITEYSGIHVGHGALDITLYRDDLMIKPPRPLASTSIPAGGIDDALVILVDDVLYSGRSVRSALDALRDVGRPRAVQLAVLVDRGHRELPLRADYVGKNVPTSRSESVHVRLREHDGRDGVVISR.

Substrate is bound by residues 57–58, R98, 119–127, R152, and V176; these read TR and DDVLYSGRS. Residues 115-127 carry the PRPP-binding motif; that stretch reads VILVDDVLYSGRS.

It belongs to the purine/pyrimidine phosphoribosyltransferase family. PyrR subfamily.

The enzyme catalyses UMP + diphosphate = 5-phospho-alpha-D-ribose 1-diphosphate + uracil. Its function is as follows. Regulates the transcription of the pyrimidine nucleotide (pyr) operon in response to exogenous pyrimidines. Also displays a weak uracil phosphoribosyltransferase activity which is not physiologically significant. The sequence is that of Bifunctional protein PyrR from Mycobacterium bovis (strain ATCC BAA-935 / AF2122/97).